The chain runs to 133 residues: Acyl-CoA thioester hydrolase YciA (133 aa).

The 116-residue stretch at 8–123 folds into the HotDog ACOT-type domain; sequence PQGELVLRTL…LFIYVAVDPD (116 aa).

This sequence belongs to the acyl coenzyme A hydrolase family.

In terms of biological role, catalyzes the hydrolysis of the thioester bond in palmitoyl-CoA and malonyl-CoA. This Salmonella typhi protein is Acyl-CoA thioester hydrolase YciA (yciA).